The primary structure comprises 250 residues: NADH-quinone oxidoreductase subunit C (250 aa).

The protein belongs to the complex I 30 kDa subunit family. In terms of assembly, NDH-1 is composed of 14 different subunits. Subunits NuoB, C, D, E, F, and G constitute the peripheral sector of the complex.

The protein resides in the cell inner membrane. The enzyme catalyses a quinone + NADH + 5 H(+)(in) = a quinol + NAD(+) + 4 H(+)(out). In terms of biological role, NDH-1 shuttles electrons from NADH, via FMN and iron-sulfur (Fe-S) centers, to quinones in the respiratory chain. The immediate electron acceptor for the enzyme in this species is believed to be ubiquinone. Couples the redox reaction to proton translocation (for every two electrons transferred, four hydrogen ions are translocated across the cytoplasmic membrane), and thus conserves the redox energy in a proton gradient. In Xanthomonas oryzae pv. oryzae (strain PXO99A), this protein is NADH-quinone oxidoreductase subunit C.